Reading from the N-terminus, the 1192-residue chain is Leucine-rich repeat receptor protein kinase EMS1 (1192 aa).

The N-terminal stretch at 1 to 18 (MAFLTALFLFLFFSFSSS) is a signal peptide. A glycan (N-linked (GlcNAc...) asparagine) is linked at Asn-47. LRR repeat units follow at residues 64 to 87 (LGRV…EISS), 90 to 112 (NLRE…IWNL), 114 to 137 (HLQT…SELP), 138 to 160 (QLLY…FFIS), 163 to 185 (ALSS…IGKL), 187 to 209 (NLSN…IGNI), 235 to 257 (HLAK…FGEL), 259 to 281 (NLSI…LGNC), 283 to 304 (SLKS…ELSE), 330 to 352 (VLDS…IEDC), 354 to 376 (MLKH…LCGS), 378 to 400 (SLEA…FDGC), 402 to 425 (SLGE…WKLP), 426 to 447 (LMAL…LWKS), 449 to 471 (NLME…IGNA), 473 to 496 (SLKR…GKLT), 497 to 520 (SLSV…GDCT), 521 to 543 (SLTT…ITAL), 545 to 567 (QLQC…PSAY), 581 to 603 (HHGI…LGEC), 605 to 628 (VLVE…SRLT), 629 to 651 (NLTI…MGNS), 653 to 675 (KLQG…FGLL), 677 to 697 (SLVK…ASLG), 701 to 723 (ELTH…LSTM), 725 to 748 (KLVG…GNLT), 749 to 772 (QLEY…CGLP), and 773 to 795 (NLEF…GVCQ). N-linked (GlcNAc...) asparagine glycans are attached at residues Asn-171, Asn-187, and Asn-208. Residue Asn-259 is glycosylated (N-linked (GlcNAc...) asparagine). 2 N-linked (GlcNAc...) asparagine glycosylation sites follow: Asn-414 and Asn-435. Asn-555 is a glycosylation site (N-linked (GlcNAc...) asparagine). Residue Asn-629 is glycosylated (N-linked (GlcNAc...) asparagine). Residues Asn-682, Asn-711, and Asn-746 are each glycosylated (N-linked (GlcNAc...) asparagine). The chain crosses the membrane as a helical span at residues 828 to 848 (WGIAGLMLGFTIIVFVFVFSL). Residue Thr-914 is modified to Phosphothreonine. Positions 917 to 1192 (FSKKNIIGDG…LDVLKALKEI (276 aa)) constitute a Protein kinase domain. ATP-binding positions include 923 to 931 (IGDGGFGTV) and Lys-945. The residue at position 990 (Tyr-990) is a Phosphotyrosine. The active-site Proton acceptor is Asp-1043. At Tyr-1085 the chain carries Phosphotyrosine.

The protein belongs to the protein kinase superfamily. Ser/Thr protein kinase family. Interacts with TPD1. Autophosphorylates in vitro. In terms of tissue distribution, present in young buds, open flowers and siliques but absent from mature leaves and roots. Strongly expressed in the young organ primordia, and as the anthers and ovules developed, became focused in the microsporangia and in the distal and chalazal regions of the ovule. In cv. Landsberg erecta, only expressed in the anthers of young floral buds.

It localises to the cell membrane. The catalysed reaction is L-seryl-[protein] + ATP = O-phospho-L-seryl-[protein] + ADP + H(+). It catalyses the reaction L-threonyl-[protein] + ATP = O-phospho-L-threonyl-[protein] + ADP + H(+). In terms of biological role, receptor with a serine/threonine-protein kinase activity required for the specification of the correct number of male archesporial initials and for the subsequent specification of tapetal and middle cell layer identities. In seeds, required for enhancing cell size and the rate of embryonic development. The polypeptide is Leucine-rich repeat receptor protein kinase EMS1 (Arabidopsis thaliana (Mouse-ear cress)).